Reading from the N-terminus, the 205-residue chain is Ribonuclease HII (205 aa).

The RNase H type-2 domain occupies 14–201 (EIIAGVDEAG…KGNINHSAIL (188 aa)). The a divalent metal cation site is built by Asp-20, Glu-21, and Asp-111.

The protein belongs to the RNase HII family. The cofactor is Mn(2+). Mg(2+) serves as cofactor.

It localises to the cytoplasm. It catalyses the reaction Endonucleolytic cleavage to 5'-phosphomonoester.. Its function is as follows. Endonuclease that specifically degrades the RNA of RNA-DNA hybrids. In Orientia tsutsugamushi (strain Ikeda) (Rickettsia tsutsugamushi), this protein is Ribonuclease HII.